The following is a 274-amino-acid chain: MTLQEDIIRQLEVKAVIDPKQEIRQSVDFLKAYLLKHPFLKTYVLGISGGQDSSLAGKLAQMAIEELRAETGDEQYQFIAVRLPYGVQADEADAQKALAFIQPDQALTVNIKEAVDGQLRALEAAGLEISDFNKGNIKARQRMISQYAIAGQTAGAVIGTDHAAENVTGFFTKFGDGGADILPLFRLTKRQGKALLKVLKADPSLYEKVPTADLEDKKPGLADEVALGVTYQEIDDYLEGHTISAEAQARIEDWWHKGQHKRHLPITIFDDFWK.

46 to 53 (GISGGQDS) is a binding site for ATP. D52 lines the Mg(2+) pocket. R140 lines the deamido-NAD(+) pocket. T160 serves as a coordination point for ATP. Mg(2+) is bound at residue E165. Deamido-NAD(+)-binding residues include K173 and D180. Residues K189 and T211 each contribute to the ATP site. 260-261 (HK) contacts deamido-NAD(+).

This sequence belongs to the NAD synthetase family. As to quaternary structure, homodimer.

The catalysed reaction is deamido-NAD(+) + NH4(+) + ATP = AMP + diphosphate + NAD(+) + H(+). The protein operates within cofactor biosynthesis; NAD(+) biosynthesis; NAD(+) from deamido-NAD(+) (ammonia route): step 1/1. Catalyzes the ATP-dependent amidation of deamido-NAD to form NAD. Uses ammonia as a nitrogen source. The chain is NH(3)-dependent NAD(+) synthetase from Streptococcus equi subsp. equi (strain 4047).